Consider the following 184-residue polypeptide: Major fimbrial subunit (184 aa).

Residues 1–22 (MKLSKIALAAALVFGINSVATA) form the signal peptide. Residues Cys-49 and Cys-88 are joined by a disulfide bond.

It belongs to the fimbrial protein family.

Its subcellular location is the fimbrium. Functionally, major structural component of PMF fimbriae. The chain is Major fimbrial subunit (pmfA) from Proteus mirabilis (strain HI4320).